Consider the following 538-residue polypeptide: [Pyruvate dehydrogenase [acetyl-transferring]]-phosphatase 1, mitochondrial (538 aa).

The transit peptide at 1 to 71 directs the protein to the mitochondrion; the sequence is MPAPTQLFFP…WWQYTQGRRY (71 aa). One can recognise a PPM-type phosphatase domain in the interval 109–525; sequence ILGFDSNQLP…DDITIIVVQF (417 aa). Positions 144 and 145 each coordinate Mn(2+). Residue Lys-202 is modified to N6-acetyllysine. Residues Asp-418 and Asp-516 each contribute to the Mn(2+) site.

Belongs to the PP2C family. As to quaternary structure, heterodimer of a catalytic (PDP1) and a regulatory (PDPR) subunit. Requires Mn(2+) as cofactor. The cofactor is Mg(2+).

It localises to the mitochondrion. The enzyme catalyses O-phospho-L-seryl-[pyruvate dehydrogenase E1 alpha subunit] + H2O = L-seryl-[pyruvate dehydrogenase E1 alpha subunit] + phosphate. With respect to regulation, magnesium-dependent and calcium-stimulated. PDP1 activity strongly depends on its Ca(2+)-dependent binding to the lipoyl domain of E2 subunit of component of the pyruvate dehydrogenase complex. In terms of biological role, mitochondrial enzyme that catalyzes the dephosphorylation and concomitant reactivation of the alpha subunit of the E1 component of the pyruvate dehydrogenase complex (PDC), thereby stimulating the conversion of pyruvate into acetyl-CoA. The polypeptide is [Pyruvate dehydrogenase [acetyl-transferring]]-phosphatase 1, mitochondrial (Pdp1) (Mus musculus (Mouse)).